Here is a 134-residue protein sequence, read N- to C-terminus: Replication enhancer protein (134 aa).

The protein belongs to the geminiviridae replication enhancer protein family. Homooligomer. Interacts with the replication-associated protein (REP). Interacts with host proliferating cell nuclear antigen (PCNA). Interacts with host retinoblastoma-related protein 1 (RBR1), and may thereby deregulate the host cell cycle. Oligomerization and interaction with PCNA are necessary for optimal replication enhancement.

In terms of biological role, increases viral DNA accumulation. Enhances infectivity and symptom expression. In Cynanchum acutum (Little mallow), this protein is Replication enhancer protein.